The chain runs to 407 residues: Putative serine/threonine-protein kinase C01C4.3 (407 aa).

Polar residues predominate over residues 33–57 (NQLQNHPPRNATQSPQRQPRTSESS). Residues 33-68 (NQLQNHPPRNATQSPQRQPRTSESSMDFPRSALRRN) are disordered. A Protein kinase domain is found at 126-397 (YTVNKQLGTG…RKCLAKEKLL (272 aa)). ATP contacts are provided by residues 132–140 (LGTGRFGFI) and Lys155. Residue Asn251 is the Proton acceptor of the active site.

This sequence belongs to the protein kinase superfamily. Ser/Thr protein kinase family.

The enzyme catalyses L-seryl-[protein] + ATP = O-phospho-L-seryl-[protein] + ADP + H(+). The catalysed reaction is L-threonyl-[protein] + ATP = O-phospho-L-threonyl-[protein] + ADP + H(+). The protein is Putative serine/threonine-protein kinase C01C4.3 of Caenorhabditis elegans.